Here is a 930-residue protein sequence, read N- to C-terminus: Vacuolar membrane protease (930 aa).

The interval 1–28 (MPQEEVHDTSSVSDDNLTNTGGGGSNYY) is disordered. The Cytoplasmic portion of the chain corresponds to 1–49 (MPQEEVHDTSSVSDDNLTNTGGGGSNYYNSHNQPNVFVRAIRSIFGYRK). A helical membrane pass occupies residues 50 to 70 (TSLTLFVILTIIFTIALSLYD). At 71–379 (NNLDLTIELP…YFFSSPISAL (309 aa)) the chain is on the vacuolar side. Asn163 carries an N-linked (GlcNAc...) asparagine glycan. Residues His177 and Asp189 each coordinate Zn(2+). Glu222 (proton acceptor) is an active-site residue. Zn(2+) contacts are provided by Glu223, Glu248, and His320. Asn354 is a glycosylation site (N-linked (GlcNAc...) asparagine). Residues 380-400 (VTINSVLIVLFPILSGPLLFI) form a helical membrane-spanning segment. At 401–411 (TVRYKKWKIGT) the chain is on the cytoplasmic side. The helical transmembrane segment at 412-432 (SNFLSLPLAIVLTVAIVMIVV) threads the bilayer. At 433–449 (NQGFQIANPFLPSSHPL) the chain is on the vacuolar side. Residues 450–470 (LLVATTTSISLLIYYVFLNGV) traverse the membrane as a helical segment. The Cytoplasmic portion of the chain corresponds to 471-480 (NWVSPSGDQK). A helical membrane pass occupies residues 481–501 (LITIIEISFIYWLILIYVTHG). The Vacuolar segment spans residues 502 to 514 (LSQNKIGDDHTGE). Residues 515–535 (FPFTVLFFLEATASLFGLIGW) traverse the membrane as a helical segment. At 536–598 (TFSRSIKQSS…FGYDWSLQYL (63 aa)) the chain is on the cytoplasmic side. The interval 542 to 570 (KQSSNDGSDEPLLTGTAERYGSDDTDEDE) is disordered. The helical transmembrane segment at 599 to 619 (LIVPISSLIIFNSGWLVLDGI) threads the bilayer. An N-linked (GlcNAc...) asparagine glycan is attached at Asn620. Residues 620–631 (NKSIQESFAAEN) lie on the Vacuolar side of the membrane. The helical transmembrane segment at 632–652 (LIYLLIQLFSQFWILPILPFV) threads the bilayer. Topologically, residues 653 to 657 (YKLNR) are cytoplasmic. The helical transmembrane segment at 658–678 (FIVFGLTIFAISGVALISFLD) threads the bilayer. Topologically, residues 679–930 (PFNQENPLKL…LVSVSLKIEV (252 aa)) are vacuolar. 4 N-linked (GlcNAc...) asparagine glycosylation sites follow: Asn697, Asn768, Asn808, and Asn890.

Belongs to the peptidase M28 family. Zn(2+) is required as a cofactor.

It is found in the vacuole membrane. May be involved in vacuolar sorting and osmoregulation. This chain is Vacuolar membrane protease, found in Candida dubliniensis (strain CD36 / ATCC MYA-646 / CBS 7987 / NCPF 3949 / NRRL Y-17841) (Yeast).